The following is a 729-amino-acid chain: Fatty acid oxidation complex subunit alpha (729 aa).

Residues 1–189 (MLYKGDTLYV…KIGLIDGIVK (189 aa)) form an enoyl-CoA hydratase/isomerase region. Asp-296 provides a ligand contact to substrate. The segment at 311–729 (EMPKQAAVLG…ARPVGALKTA (419 aa)) is 3-hydroxyacyl-CoA dehydrogenase. NAD(+) is bound by residues Met-324, Asp-343, 400 to 402 (VVE), Lys-407, and Ser-429. His-450 functions as the For 3-hydroxyacyl-CoA dehydrogenase activity in the catalytic mechanism. Residue Asn-453 participates in NAD(+) binding. The substrate site is built by Asn-500 and Tyr-660. The tract at residues 708–729 (RHNEPYYPPVEPARPVGALKTA) is disordered.

This sequence in the N-terminal section; belongs to the enoyl-CoA hydratase/isomerase family. The protein in the C-terminal section; belongs to the 3-hydroxyacyl-CoA dehydrogenase family. In terms of assembly, heterotetramer of two alpha chains (FadB) and two beta chains (FadA).

The enzyme catalyses a (3S)-3-hydroxyacyl-CoA + NAD(+) = a 3-oxoacyl-CoA + NADH + H(+). The catalysed reaction is a (3S)-3-hydroxyacyl-CoA = a (2E)-enoyl-CoA + H2O. It carries out the reaction a 4-saturated-(3S)-3-hydroxyacyl-CoA = a (3E)-enoyl-CoA + H2O. It catalyses the reaction (3S)-3-hydroxybutanoyl-CoA = (3R)-3-hydroxybutanoyl-CoA. The enzyme catalyses a (3Z)-enoyl-CoA = a 4-saturated (2E)-enoyl-CoA. The catalysed reaction is a (3E)-enoyl-CoA = a 4-saturated (2E)-enoyl-CoA. The protein operates within lipid metabolism; fatty acid beta-oxidation. Functionally, involved in the aerobic and anaerobic degradation of long-chain fatty acids via beta-oxidation cycle. Catalyzes the formation of 3-oxoacyl-CoA from enoyl-CoA via L-3-hydroxyacyl-CoA. It can also use D-3-hydroxyacyl-CoA and cis-3-enoyl-CoA as substrate. This is Fatty acid oxidation complex subunit alpha from Enterobacter sp. (strain 638).